Here is a 423-residue protein sequence, read N- to C-terminus: Adenylosuccinate synthetase (423 aa).

Residues 11 to 17 and 39 to 41 each bind GTP; these read GDEGKGK and GHT. Catalysis depends on aspartate 12, which acts as the Proton acceptor. Mg(2+)-binding residues include aspartate 12 and glycine 39. IMP-binding positions include 12 to 15, 37 to 40, threonine 127, arginine 141, glutamine 223, threonine 238, and arginine 302; these read DEGK and NAGH. Catalysis depends on histidine 40, which acts as the Proton donor. 298–304 serves as a coordination point for substrate; the sequence is TTTGRSR. GTP-binding positions include arginine 304, 330-332, and 412-414; these read KLD and SVG.

This sequence belongs to the adenylosuccinate synthetase family. As to quaternary structure, homodimer. It depends on Mg(2+) as a cofactor.

The protein localises to the cytoplasm. The enzyme catalyses IMP + L-aspartate + GTP = N(6)-(1,2-dicarboxyethyl)-AMP + GDP + phosphate + 2 H(+). The protein operates within purine metabolism; AMP biosynthesis via de novo pathway; AMP from IMP: step 1/2. In terms of biological role, plays an important role in the de novo pathway of purine nucleotide biosynthesis. Catalyzes the first committed step in the biosynthesis of AMP from IMP. This chain is Adenylosuccinate synthetase, found in Methanococcoides burtonii (strain DSM 6242 / NBRC 107633 / OCM 468 / ACE-M).